The following is a 1403-amino-acid chain: DNA-directed RNA polymerase subunit beta' (1403 aa).

4 residues coordinate Zn(2+): Cys70, Cys72, Cys85, and Cys88. The Mg(2+) site is built by Asp461, Asp463, and Asp465. The interval 687–708 (QQISQEETTGDRDGKRETRKQP) is disordered. A compositionally biased stretch (basic and acidic residues) spans 695 to 706 (TGDRDGKRETRK). Zn(2+) contacts are provided by Cys805, Cys879, Cys886, and Cys889. The disordered stretch occupies residues 1381 to 1403 (THGDTGPLGEPSRPVGTQTTGAA).

It belongs to the RNA polymerase beta' chain family. In terms of assembly, the RNAP catalytic core consists of 2 alpha, 1 beta, 1 beta' and 1 omega subunit. When a sigma factor is associated with the core the holoenzyme is formed, which can initiate transcription. It depends on Mg(2+) as a cofactor. Zn(2+) serves as cofactor.

The enzyme catalyses RNA(n) + a ribonucleoside 5'-triphosphate = RNA(n+1) + diphosphate. Its function is as follows. DNA-dependent RNA polymerase catalyzes the transcription of DNA into RNA using the four ribonucleoside triphosphates as substrates. The protein is DNA-directed RNA polymerase subunit beta' of Myxococcus xanthus (strain DK1622).